Reading from the N-terminus, the 429-residue chain is Tyrosine--tRNA ligase (429 aa).

An L-tyrosine-binding site is contributed by Y36. The 'HIGH' region motif lies at 41–50 (PTAASLHAGH). Residues Y171 and Q175 each contribute to the L-tyrosine site. Positions 231–235 (KFGKS) match the 'KMSKS' region motif. K234 contributes to the ATP binding site. The 58-residue stretch at 360-417 (ATIVDLLVATGLAESRGAARRTVNEGGAAVNNQKIADPDWTPADGDYLHGRWLVVRRG) folds into the S4 RNA-binding domain.

Belongs to the class-I aminoacyl-tRNA synthetase family. TyrS type 1 subfamily. In terms of assembly, homodimer.

It is found in the cytoplasm. It carries out the reaction tRNA(Tyr) + L-tyrosine + ATP = L-tyrosyl-tRNA(Tyr) + AMP + diphosphate + H(+). Catalyzes the attachment of tyrosine to tRNA(Tyr) in a two-step reaction: tyrosine is first activated by ATP to form Tyr-AMP and then transferred to the acceptor end of tRNA(Tyr). The protein is Tyrosine--tRNA ligase of Nocardia farcinica (strain IFM 10152).